Here is a 460-residue protein sequence, read N- to C-terminus: Glutamate--tRNA ligase 2 (460 aa).

The short motif at Pro-8–Gly-18 is the 'HIGH' region element. The 'KMSKS' region signature appears at Lys-237–Arg-241. Position 240 (Lys-240) interacts with ATP.

The protein belongs to the class-I aminoacyl-tRNA synthetase family. Glutamate--tRNA ligase type 1 subfamily. Monomer.

It is found in the cytoplasm. It catalyses the reaction tRNA(Glu) + L-glutamate + ATP = L-glutamyl-tRNA(Glu) + AMP + diphosphate. Functionally, catalyzes the attachment of glutamate to tRNA(Glu) in a two-step reaction: glutamate is first activated by ATP to form Glu-AMP and then transferred to the acceptor end of tRNA(Glu). The protein is Glutamate--tRNA ligase 2 of Campylobacter fetus subsp. fetus (strain 82-40).